The sequence spans 466 residues: Ribulose bisphosphate carboxylase large chain (466 aa).

Lys5 is subject to N6,N6,N6-trimethyllysine. Residues Asn114 and Thr164 each contribute to the substrate site. The Proton acceptor role is filled by Lys166. Lys168 contacts substrate. Mg(2+)-binding residues include Lys192, Asp194, and Glu195. At Lys192 the chain carries N6-carboxylysine. His285 acts as the Proton acceptor in catalysis. Substrate is bound by residues Arg286, His318, and Ser370.

Belongs to the RuBisCO large chain family. Type I subfamily. In terms of assembly, heterohexadecamer of 8 large chains and 8 small chains; disulfide-linked. The disulfide link is formed within the large subunit homodimers. It depends on Mg(2+) as a cofactor. The disulfide bond which can form in the large chain dimeric partners within the hexadecamer appears to be associated with oxidative stress and protein turnover.

The protein localises to the plastid. It localises to the chloroplast. It carries out the reaction 2 (2R)-3-phosphoglycerate + 2 H(+) = D-ribulose 1,5-bisphosphate + CO2 + H2O. The enzyme catalyses D-ribulose 1,5-bisphosphate + O2 = 2-phosphoglycolate + (2R)-3-phosphoglycerate + 2 H(+). Its function is as follows. RuBisCO catalyzes two reactions: the carboxylation of D-ribulose 1,5-bisphosphate, the primary event in carbon dioxide fixation, as well as the oxidative fragmentation of the pentose substrate in the photorespiration process. Both reactions occur simultaneously and in competition at the same active site. The sequence is that of Ribulose bisphosphate carboxylase large chain from Asarum canadense (Wild ginger).